The following is a 277-amino-acid chain: Large ribosomal subunit protein uL2 (277 aa).

The disordered stretch occupies residues 219–277 (TVRGSVMNPNDHPHGGGEGRSPIGHPSPRTPWGKPALGYKTRKNKKYSDRFIVKRRHDK).

Belongs to the universal ribosomal protein uL2 family. As to quaternary structure, part of the 50S ribosomal subunit. Forms a bridge to the 30S subunit in the 70S ribosome.

In terms of biological role, one of the primary rRNA binding proteins. Required for association of the 30S and 50S subunits to form the 70S ribosome, for tRNA binding and peptide bond formation. It has been suggested to have peptidyltransferase activity; this is somewhat controversial. Makes several contacts with the 16S rRNA in the 70S ribosome. The sequence is that of Large ribosomal subunit protein uL2 from Clostridium botulinum (strain 657 / Type Ba4).